Reading from the N-terminus, the 180-residue chain is Adenine phosphoribosyltransferase (180 aa).

It belongs to the purine/pyrimidine phosphoribosyltransferase family. As to quaternary structure, homodimer.

Its subcellular location is the cytoplasm. It carries out the reaction AMP + diphosphate = 5-phospho-alpha-D-ribose 1-diphosphate + adenine. It participates in purine metabolism; AMP biosynthesis via salvage pathway; AMP from adenine: step 1/1. Its function is as follows. Catalyzes a salvage reaction resulting in the formation of AMP, that is energically less costly than de novo synthesis. The chain is Adenine phosphoribosyltransferase from Mycoplasma genitalium (strain ATCC 33530 / DSM 19775 / NCTC 10195 / G37) (Mycoplasmoides genitalium).